A 94-amino-acid polypeptide reads, in one-letter code: UPF0298 protein SZO_03600 (94 aa).

This sequence belongs to the UPF0298 family.

The protein localises to the cytoplasm. This chain is UPF0298 protein SZO_03600, found in Streptococcus equi subsp. zooepidemicus (strain H70).